We begin with the raw amino-acid sequence, 433 residues long: Trigger factor (433 aa).

A PPIase FKBP-type domain is found at 161-246; that stretch reads DSRVTIDFIG…LHKVEAQELP (86 aa).

This sequence belongs to the FKBP-type PPIase family. Tig subfamily.

It is found in the cytoplasm. The catalysed reaction is [protein]-peptidylproline (omega=180) = [protein]-peptidylproline (omega=0). Its function is as follows. Involved in protein export. Acts as a chaperone by maintaining the newly synthesized protein in an open conformation. Functions as a peptidyl-prolyl cis-trans isomerase. The polypeptide is Trigger factor (Photobacterium profundum (strain SS9)).